Consider the following 112-residue polypeptide: MASPQELACVYAALILQDDEVAITGDKIATLLKAANIEFEPFWPGLFAKALEGVDVKNLITSVSSGASAGPAQAAAAAPAGGAPAAAAPAESKEGRRSQGESDDDMGFGLLD.

Residues 71–90 show a composition bias toward low complexity; the sequence is PAQAAAAAPAGGAPAAAAPA. The tract at residues 71-112 is disordered; it reads PAQAAAAAPAGGAPAAAAPAESKEGRRSQGESDDDMGFGLLD. The segment covering 91–100 has biased composition (basic and acidic residues); it reads ESKEGRRSQG.

This sequence belongs to the eukaryotic ribosomal protein P1/P2 family. As to quaternary structure, P1 and P2 exist as dimers at the large ribosomal subunit.

In terms of biological role, plays an important role in the elongation step of protein synthesis. The polypeptide is Large ribosomal subunit protein P1 (rpl-21) (Oscheius tipulae).